Here is a 321-residue protein sequence, read N- to C-terminus: Tyrosine recombinase XerC (321 aa).

The region spanning 16–107 is the Core-binding (CB) domain; it reads PSIAQEMTRW…GLRSFGRFLE (92 aa). A Tyr recombinase domain is found at 128-315; it reads SLPKPLPMAS…DSERLLEVYA (188 aa). Residues Arg-173, Lys-199, His-267, Arg-270, and His-293 contribute to the active site. Catalysis depends on Tyr-302, which acts as the O-(3'-phospho-DNA)-tyrosine intermediate.

Belongs to the 'phage' integrase family. XerC subfamily. As to quaternary structure, forms a cyclic heterotetrameric complex composed of two molecules of XerC and two molecules of XerD.

The protein resides in the cytoplasm. In terms of biological role, site-specific tyrosine recombinase, which acts by catalyzing the cutting and rejoining of the recombining DNA molecules. The XerC-XerD complex is essential to convert dimers of the bacterial chromosome into monomers to permit their segregation at cell division. It also contributes to the segregational stability of plasmids. The polypeptide is Tyrosine recombinase XerC (Bradyrhizobium diazoefficiens (strain JCM 10833 / BCRC 13528 / IAM 13628 / NBRC 14792 / USDA 110)).